The following is a 151-amino-acid chain: Macrodomain Ter protein (151 aa).

The protein belongs to the MatP family. In terms of assembly, homodimer.

The protein resides in the cytoplasm. In terms of biological role, required for spatial organization of the terminus region of the chromosome (Ter macrodomain) during the cell cycle. Prevents early segregation of duplicated Ter macrodomains during cell division. Binds specifically to matS, which is a 13 bp signature motif repeated within the Ter macrodomain. This Escherichia fergusonii (strain ATCC 35469 / DSM 13698 / CCUG 18766 / IAM 14443 / JCM 21226 / LMG 7866 / NBRC 102419 / NCTC 12128 / CDC 0568-73) protein is Macrodomain Ter protein.